Reading from the N-terminus, the 120-residue chain is Protein BEX4 (120 aa).

Positions 1–54 (MESKEELAANNLNGENAQQENEGGEQAPTQNEEESRHLGGGEGQKPGGNIRRGR) are disordered. Residues 8–27 (AANNLNGENAQQENEGGEQA) are compositionally biased toward low complexity. The segment at 31–90 (NEEESRHLGGGEGQKPGGNIRRGRVRRLVPNFRWAIPNRHIEHNEARDDVERFVGQMMEI) is interaction with SIRT2. The tract at residues 31–120 (NEEESRHLGG…DNHYDFCLIP (90 aa)) is interaction with alpha-tubulin. A Zn(2+)-binding site is contributed by C117.

This sequence belongs to the BEX family. Interacts with alpha-tubulin. Interacts with SIRT2. Ubiquitinated and degraded by the proteasome. In terms of tissue distribution, very high expression in heart, skeletal muscle, liver, and kidney. The levels of expression are uniform throughout the brain.

Its subcellular location is the cytoplasm. It is found in the cytoskeleton. The protein resides in the spindle pole. The protein localises to the nucleus. May play a role in microtubule deacetylation by negatively regulating the SIRT2 deacetylase activity toward alpha-tubulin and thereby participate in the control of cell cycle progression and genomic stability. In absence of reductive stress, acts as a pseudosubstrate for the CRL2(FEM1B) complex: associates with FEM1B via zinc, thereby preventing association between FEM1B and its substrates. The chain is Protein BEX4 from Homo sapiens (Human).